Reading from the N-terminus, the 1360-residue chain is MLFVFLTLLPSCLGYIGDFRCINLVNTRISNARAPSVSTEVVDVSKGLGTYYVLDRVYLNATLLLTGYYPVDGSMYRNMALMGTNTLSLNWFEPPFLSEFNDGIYAKVKNLKASLPIGSASYFPTIIIGSNFVNTSYTVVLEPYNGIIMASICQYTICQLPHTDCKPNTGGNTLIGFWHTDLRPPVCILKRNFTFNVNAEWLYFHFYQQGGTFYAYYADVSSATTFLFSSYIGAVLTQYFVLPYMCSPTTSGVSSPQYWVTPLVKRQYLFNFNQKGIITSAVDCASSYTSEIKCKTQSMNPNTGVYDLSGYTVQPVGLVYRRVRNLPDCKIEEWLAANTVPSPLNWERKTFQNCNFNLSSLLRFVQAESLSCSNIDASKVYGMCFGSISIDKFAIPNSRRVDLQLGKSGLLQSFNYKIDTRATSCQLYYSLAQDNVTVINHNPSSWNRRYGFNDVATFHSGEHDVAYAEACFTVGASYCPCAKPSTVYSCVTGKPKSANCPTGTSNRECNVQASGFKSKCDCTCNPSPLTTYDPRCLQARSMLGVGDHCEGLGILEDKCGGSNICNCSADAFVGWAMDSCLSNARCHIFSNLMLNGINSGTTCSTDFQLPNTEVVTGVCVKYDLYGSTGQGVFKEVKADYYNSWQNLLYDVNGNLNGFRDIVTNKTYLLRSCYSGRVSAAYHQDAPEPALLYRNLKCDYVFNNNISREETPLNYFDSYLGCVINADNSTEQSVDACDLRMGSGLCVNYSIAHRARRSVSTGYKLTTFEPFTVSIVNDSVESVGGLYEMQIPTNFTIASHQEFIQTRSPKVTIDCAAFVCGDYTACRQQLVDYGSFCDNINAILGEVNNLIDTMQLQVASALIQGVTLSSRLADGISGQIDDINFSPLLGCLGSDCSEGTKAAQGRSAIEDVLFDKVKLSDVGFVESYNNCTGGQEVRDLLCVQSFNGIKVLPPVLSESQISGYTAGATASAMFPPWSAAAGVPFALSVQYRINGLGVTMNVLSENQKMIASSFNNAIGAIQEGFDATNSALAKIQSVVNANAEALNNLLNQLSNRFGAISASLQEILSRLDALEAQAQIDRLINGRLTALNAYVSKQLSDMTLIKVSAAQAIEKVNECVKSQSPRINFCGNGNHILSLVQNAPYGLYFIHFSYVPTSFTTVNVSPGLCISGDRGLAPKAGYFVQDHGEWKFTGSNYYYPESITDKNSVVMSSCAVNYTKAPEVFLNTSITNLPDFKEELDKWFKNQTSIVPDLSFDIGKLNVTFLDLSYEMNRIQDAIKNLNESYINLKEIGTYEMYVKWPWYVWLLIGLAGVAVCVLLFFICCCTGCGSCCFKKCGNCCDEYGGRQAGIVIHNISSHED.

The signal sequence occupies residues 1 to 13; the sequence is MLFVFLTLLPSCL. Residues 14-1301 are Extracellular-facing; sequence GYIGDFRCIN…GTYEMYVKWP (1288 aa). In terms of domain architecture, BetaCoV S1-NTD spans 15-296; sequence YIGDFRCINL…SYTSEIKCKT (282 aa). 5 cysteine pairs are disulfide-bonded: Cys-21–Cys-158, Cys-153–Cys-187, Cys-165–Cys-246, Cys-284–Cys-294, and Cys-329–Cys-354. N-linked (GlcNAc...) asparagine; by host glycosylation is found at Asn-60 and Asn-134. The N-linked (GlcNAc...) asparagine; by host glycan is linked to Asn-192. The 279-residue stretch at 327 to 605 folds into the BetaCoV S1-CTD domain; sequence PDCKIEEWLA…GINSGTTCST (279 aa). N-linked (GlcNAc...) asparagine; by host glycosylation is present at Asn-357. Disulfide bonds link Cys-372/Cys-425 and Cys-384/Cys-603. N-linked (GlcNAc...) asparagine; by host glycosylation is found at Asn-435, Asn-566, Asn-664, Asn-704, Asn-727, Asn-747, Asn-776, and Asn-793. Fusion peptide stretches follow at residues 906–927 and 925–945; these read SAIEDVLFDKVKLSDVGFVESY and ESYNNCTGGQEVRDLLCVQSF. Asn-929 carries N-linked (GlcNAc...) asparagine; by host glycosylation. Cys-930 and Cys-941 form a disulfide bridge. The segment at 1006 to 1056 is heptad repeat 1; sequence QKMIASSFNNAIGAIQEGFDATNSALAKIQSVVNANAEALNNLLNQLSNRF. A coiled-coil region spans residues 1035-1079; the sequence is QSVVNANAEALNNLLNQLSNRFGAISASLQEILSRLDALEAQAQI. Residues Asn-1216, Asn-1226, Asn-1245, Asn-1261, and Asn-1282 are each glycosylated (N-linked (GlcNAc...) asparagine; by host). The heptad repeat 2 stretch occupies residues 1250 to 1290; sequence VPDLSFDIGKLNVTFLDLSYEMNRIQDAIKNLNESYINLKE. Residues 1263 to 1291 adopt a coiled-coil conformation; it reads TFLDLSYEMNRIQDAIKNLNESYINLKEI. A helical transmembrane segment spans residues 1302–1322; the sequence is WYVWLLIGLAGVAVCVLLFFI. Residues 1323–1360 lie on the Cytoplasmic side of the membrane; that stretch reads CCCTGCGSCCFKKCGNCCDEYGGRQAGIVIHNISSHED. The KxHxx motif lies at 1356-1360; the sequence is SSHED.

This sequence belongs to the betacoronaviruses spike protein family. Homotrimer; each monomer consists of a S1 and a S2 subunit. The resulting peplomers protrude from the virus surface as spikes. In terms of processing, specific enzymatic cleavages in vivo yield mature proteins. The precursor is processed into S1 and S2 by host cell furin or another cellular protease to yield the mature S1 and S2 proteins. Additionally, a second cleavage leads to the release of a fusion peptide after viral attachment to host cell receptor. Post-translationally, the cytoplasmic Cys-rich domain is palmitoylated. Spike glycoprotein is digested within host endosomes.

Its subcellular location is the virion membrane. It is found in the host endoplasmic reticulum-Golgi intermediate compartment membrane. It localises to the host cell membrane. Functionally, attaches the virion to the cell membrane by interacting with host receptor, initiating the infection. In terms of biological role, mediates fusion of the virion and cellular membranes by acting as a class I viral fusion protein. Under the current model, the protein has at least three conformational states: pre-fusion native state, pre-hairpin intermediate state, and post-fusion hairpin state. During viral and target cell membrane fusion, the coiled coil regions (heptad repeats) assume a trimer-of-hairpins structure, positioning the fusion peptide in close proximity to the C-terminal region of the ectodomain. The formation of this structure appears to drive apposition and subsequent fusion of viral and target cell membranes. Acts as a viral fusion peptide which is unmasked following S2 cleavage occurring upon virus endocytosis. The chain is Spike glycoprotein from Rat coronavirus (strain 681) (RCV-SDAV).